We begin with the raw amino-acid sequence, 305 residues long: MNLIEIETYLANASFALLLITMLIYGMKAIFTKNNILQLFGTLGILFSNFLVALLLSIRWFDSHHFPLSNMYESLMFLCWCFTFFHLLIEKYIQINFIGFITVPIAMLVNAFATFFLPLDMQHSTPLVPALKSNWLIMHVTIMMASYAALILGSLLSIAFLFLTYNKQIELQGNSIGNINDEMNSYITIDIEFQKNESIELAKLIDNLSYRTIGIGFPLLTIGIISGAVWANDAWGSYWSWDPKETWALITWIIFAIYLHTRITKGWQGRRPAIVAFIGFVIVWVCYLGVNLLGQGLHSYGWFTK.

8 helical membrane-spanning segments follow: residues 11 to 31 (ANASFALLLITMLIYGMKAIF), 36 to 56 (ILQLFGTLGILFSNFLVALLL), 75 to 95 (LMFLCWCFTFFHLLIEKYIQI), 97 to 117 (FIGFITVPIAMLVNAFATFFL), 142 to 162 (IMMASYAALILGSLLSIAFLF), 212 to 232 (TIGIGFPLLTIGIISGAVWAN), 239 to 259 (WSWDPKETWALITWIIFAIYL), and 273 to 293 (AIVAFIGFVIVWVCYLGVNLL).

This sequence belongs to the CcmF/CycK/Ccl1/NrfE/CcsA family. In terms of assembly, may interact with Ccs1.

It is found in the plastid. The protein localises to the chloroplast thylakoid membrane. In terms of biological role, required during biogenesis of c-type cytochromes (cytochrome c6 and cytochrome f) at the step of heme attachment. The protein is Cytochrome c biogenesis protein CcsA of Mesostigma viride (Green alga).